A 91-amino-acid polypeptide reads, in one-letter code: YcgL domain-containing protein ESA_01460 (91 aa).

Residues 1 to 85 enclose the YcgL domain; it reads MFCVIYRSAR…PPENLLKQHL (85 aa).

This chain is YcgL domain-containing protein ESA_01460, found in Cronobacter sakazakii (strain ATCC BAA-894) (Enterobacter sakazakii).